We begin with the raw amino-acid sequence, 145 residues long: Ribonuclease VapC7 (145 aa).

In terms of domain architecture, PINc spans 2–129; that stretch reads IVLDTTVLVY…PAFADLSDVV (128 aa). Asp-5 and Asp-100 together coordinate Mg(2+).

The protein belongs to the PINc/VapC protein family. Mg(2+) is required as a cofactor.

In terms of biological role, toxic component of a type II toxin-antitoxin (TA) system. An RNase. The cognate antitoxin is VapB7. The protein is Ribonuclease VapC7 of Mycobacterium tuberculosis (strain ATCC 25618 / H37Rv).